The primary structure comprises 233 residues: MGRGRVELKRIENKINRQVTFAKRRNGLLKKAYELSVLCDAEVALIVFSNRGKLYEFCSTSCMNKTLERYQRCSYGSLETSQPSKETESSYQEYLKLKAKVDVLQRSHRNLLGEDLGELSTKELEQLEHQLDKSLRQIRSIKTQHMLDQLADLQKKEEMLFESNRALKTKLEESCASFRPNWDVRQPGDGFFEPLPLPCNNNLQIGYNEATQDQMNATTSAQNVHGFAQGWML.

The MADS-box domain maps to 3–58; that stretch reads RGRVELKRIENKINRQVTFAKRRNGLLKKAYELSVLCDAEVALIVFSNRGKLYEFC. The region spanning 87–177 is the K-box domain; that stretch reads TESSYQEYLK…KTKLEESCAS (91 aa).

The protein localises to the nucleus. The polypeptide is MADS-box protein CMB1 (CMB1) (Dianthus caryophyllus (Carnation)).